The following is a 61-amino-acid chain: Large ribosomal subunit protein bL32 (61 aa).

The protein belongs to the bacterial ribosomal protein bL32 family.

This is Large ribosomal subunit protein bL32 from Acidithiobacillus ferrooxidans (strain ATCC 23270 / DSM 14882 / CIP 104768 / NCIMB 8455) (Ferrobacillus ferrooxidans (strain ATCC 23270)).